Consider the following 236-residue polypeptide: Dense granule protein 7 (236 aa).

An N-terminal signal peptide occupies residues 1 to 26 (MARHAIFSALCVLGLVAAALPQFATA). Positions 45 to 106 (DGQAPVDSLR…EVHFRKRGVR (62 aa)) are disordered. Over residues 70-80 (TTSMDKASVES) the composition is skewed to polar residues. Residues 147 to 236 (AVGMGASYFA…SGEDGEDARQ (90 aa)) are required for dimerization, interactions with liposomes and liposome tubulation. The helical transmembrane segment at 181–201 (VGTVLGFAALAAAAAFLGMGL) threads the bilayer. Residues 208 to 236 (FSPRKNRSRQPALEQEVPESGEDGEDARQ) form a disordered region. A glycan (N-linked (GlcNAc...) asparagine) is linked at N213. Residues 223–236 (EVPESGEDGEDARQ) are compositionally biased toward acidic residues.

This sequence belongs to the Gra7 family. Homodimer. Can form higher order homooligomers in a lipid-stimulated manner. Component of a complex at least composed of ROP18, GRA7 and ROP2. Interacts with ROP5. Interacts with ROP18 in the absence of ROP5. Interacts with mouse IRGA6/IIGP1 in GTP-dependent manner; the interaction results in faster turnover of the GTP-activated IRGA6/IIGP1 oligomer. Interacts with mouse TRAF6 (via N-terminal RING domain); the interaction plays a role in GRA7-induced pro-inflammatory cytokine production in mouse macrophages.

The protein localises to the secreted. Its subcellular location is the parasitophorous vacuole lumen. It is found in the parasitophorous vacuole membrane. It localises to the cytoplasm. The protein resides in the host cytoplasm. The protein localises to the cytoplasmic vesicle. Its subcellular location is the secretory vesicle. Binds lipid bilayers, sequesters host endocytic organelles in the parasitophorous vacuole space, and causes their deformation and remodeling. Plays a role in nutrient acquisition from the host. In complex with ROP18, targets immunity-related GTPases (IRGs) to prevent IRG-mediated parasite killing by mouse cells. Important component within a kinase complex, contributing to phosphorylation of mouse IRGA6/IIGP1, an immunity-related GTPase that protects mice from infection by certain intracellular pathogens, by Toxoplasma gondii ROP5 and ROP18. Induces pro-inflammatory cytokine production in host macrophages. Activates host pro-inflammatory signaling pathways in a MyD88-dependent manner. Triggers generation of reactive oxygen species (ROS) in host cells. Activates MAPK pathway in host cells. Activates host NF-kappa-B signaling pathway by interacting with TRAF6 and modulating the 'Lys-63'-linked polyubiquitination of TRAF6. This Toxoplasma gondii protein is Dense granule protein 7.